Consider the following 557-residue polypeptide: Probable tRNA-splicing endonuclease subunit tsp-5 (557 aa).

Disordered regions lie at residues 1 to 36 (MPLD…MMDE), 131 to 152 (KLTK…DRKL), 225 to 252 (SVPA…EDDD), 370 to 403 (PSST…SDSP), and 514 to 557 (SGGP…GRGN). Residues 131-140 (KLTKRGKEGA) are compositionally biased toward basic and acidic residues. The segment covering 370–381 (PSSTSSSASPTA) has biased composition (low complexity). Gly residues-rich tracts occupy residues 517 to 527 (PRRGGGGGGKK) and 538 to 549 (GRGGGRGGGRGG).

This sequence belongs to the SEN54 family. As to quaternary structure, tRNA splicing endonuclease is a heterotetramer composed of tsp-2/sen2, tsp-1/sen15, tsp-4/sen34 and tsp-5/sen54. Interacts directly with tsp-2/sen2.

Functionally, non-catalytic subunit of the tRNA-splicing endonuclease complex, a complex responsible for identification and cleavage of the splice sites in pre-tRNA. It cleaves pre-tRNA at the 5' and 3' splice sites to release the intron. The products are an intron and two tRNA half-molecules bearing 2',3' cyclic phosphate and 5'-OH termini. There are no conserved sequences at the splice sites, but the intron is invariably located at the same site in the gene, placing the splice sites an invariant distance from the constant structural features of the tRNA body. May be required to embody the molecular ruler of the complex. The sequence is that of Probable tRNA-splicing endonuclease subunit tsp-5 (tsp-5) from Neurospora crassa (strain ATCC 24698 / 74-OR23-1A / CBS 708.71 / DSM 1257 / FGSC 987).